A 680-amino-acid chain; its full sequence is 1-deoxy-D-xylulose-5-phosphate synthase (680 aa).

Thiamine diphosphate contacts are provided by residues His-113 and 154–156; that span reads GHS. Asp-185 serves as a coordination point for Mg(2+). Thiamine diphosphate-binding positions include 186 to 187, Asn-214, Phe-323, and Glu-408; that span reads GA. Asn-214 contacts Mg(2+).

The protein belongs to the transketolase family. DXPS subfamily. Homodimer. The cofactor is Mg(2+). Thiamine diphosphate is required as a cofactor.

It catalyses the reaction D-glyceraldehyde 3-phosphate + pyruvate + H(+) = 1-deoxy-D-xylulose 5-phosphate + CO2. The protein operates within metabolic intermediate biosynthesis; 1-deoxy-D-xylulose 5-phosphate biosynthesis; 1-deoxy-D-xylulose 5-phosphate from D-glyceraldehyde 3-phosphate and pyruvate: step 1/1. Its function is as follows. Catalyzes the acyloin condensation reaction between C atoms 2 and 3 of pyruvate and glyceraldehyde 3-phosphate to yield 1-deoxy-D-xylulose-5-phosphate (DXP). This is 1-deoxy-D-xylulose-5-phosphate synthase from Psychrobacter arcticus (strain DSM 17307 / VKM B-2377 / 273-4).